We begin with the raw amino-acid sequence, 349 residues long: MATATLTIDLDAIAANWRALDQMTASDCQTGAVVKADSYGLGAAKVAHALARAGARRFFVATCEEGADVRRALGSGPQICVFSGHMEGDTALIRDFDLTPMLNSIDQLTRHFEALGGQPFGLQLDSGMNRLGLEPGEWEAVAGFALEAGPELLMSHLACSDDPDHPMNAEQLGAFRAMTDGTGVPRSLSATGGILLGPAWHFELTRPGIGLYGGRPFENARPVVRLSLPVIQVREVEIGEPVGYSNTWTAEHTSTIATVAAGYADGLPRTLSSRATLYAGRVPCPLVGRVSMDLITVDVSHLPEVPETLDILGPHQTPDDLADTAGTIGYEILTSLGRRYQRRYGALAA.

Lys35 acts as the Proton acceptor; specific for D-alanine in catalysis. At Lys35 the chain carries N6-(pyridoxal phosphate)lysine. Arg130 is a substrate binding site. Tyr244 serves as the catalytic Proton acceptor; specific for L-alanine. Met292 serves as a coordination point for substrate.

It belongs to the alanine racemase family. Requires pyridoxal 5'-phosphate as cofactor.

It carries out the reaction L-alanine = D-alanine. Its pathway is amino-acid biosynthesis; D-alanine biosynthesis; D-alanine from L-alanine: step 1/1. Functionally, catalyzes the interconversion of L-alanine and D-alanine. May also act on other amino acids. This is Alanine racemase (alr) from Cereibacter sphaeroides (strain ATCC 17023 / DSM 158 / JCM 6121 / CCUG 31486 / LMG 2827 / NBRC 12203 / NCIMB 8253 / ATH 2.4.1.) (Rhodobacter sphaeroides).